The primary structure comprises 845 residues: Ribonucleoside-diphosphate reductase subunit alpha (845 aa).

Residues 1 to 98 (MHIIKRNGEP…LYRDDRTKKR (98 aa)) enclose the ATP-cone domain. Substrate contacts are provided by residues threonine 303, 318–319 (SC), glycine 347, 534–538 (NLCTE), and 725–729 (PTSST). A disulfide bridge connects residues cysteine 319 and cysteine 574. Asparagine 534 serves as the catalytic Proton acceptor. Residue cysteine 536 is the Cysteine radical intermediate of the active site. The active-site Proton acceptor is glutamate 538.

Belongs to the ribonucleoside diphosphate reductase large chain family. Tetramer of two alpha and two beta subunits.

It catalyses the reaction a 2'-deoxyribonucleoside 5'-diphosphate + [thioredoxin]-disulfide + H2O = a ribonucleoside 5'-diphosphate + [thioredoxin]-dithiol. Under complex allosteric control mediated by deoxynucleoside triphosphates and ATP binding. The type of nucleotide bound at the specificity site determines substrate preference. It seems probable that ATP makes the enzyme reduce CDP and UDP, dGTP favors ADP reduction and dTTP favors GDP reduction. Functionally, provides the precursors necessary for DNA synthesis. Catalyzes the biosynthesis of deoxyribonucleotides from the corresponding ribonucleotides. The polypeptide is Ribonucleoside-diphosphate reductase subunit alpha (nrdA) (Treponema pallidum (strain Nichols)).